A 698-amino-acid chain; its full sequence is MSQEKKVFKTEWAGRSLTIETGQLAKQANGAVLVRYGDTVVLSTATASKEPRDGDFFPLTVNYEEKMYAAGKIPGGFKKREGRPGDDATLTARLIDRPIRPLFPKGYKHDVQIMNMVLSADPDCSPQMAAMIGSSMALSVSDIPFQGPIAGVNVGYIDGKYIINPTVEEKEVSRLDLEVAGHKDAVNMVEAGASEITEQEMLEAIFFGHEEIQRLVDFQQQIVDHIQPVKQEFIPTERDEALVERVKSLTEEKGLKETVLTFDKQQRDENLDNLKEEIVNEFIDEEDPENELLIKEVYAILNELVKEEVRRLIADEKIRPDGRKPDEIRPLDSEVGILPRTHGSGLFTRGQTQALSVLTLGALGDYQLIDGLGPEEEKRFMHHYNFPNFSVGETGPVRAPGRREIGHGALGERALKYIIPDTADFPYTIRIVSEVLESNGSSSQASICGSTLALMDAGVPIKAPVAGIAMGLVTREDSYTILTDIQGMEDALGDMDFKVAGTKEGITAIQMDIKIDGLTREIIEEALEQARRGRLEIMNHMLQTIDQPRTELSAYAPKVVTMTIKPDKIRDVIGPGGKKINEIIDETGVKLDIEQDGTIFIGAVDQAMINRAREIIEEITREAEVGQTYQATVKRIEKYGAFVGLFPGKDALLHISQISKNRIEKVEDVLKIGDTIEVKITEIDKQGRVNASHRALEE.

Positions 490 and 496 each coordinate Mg(2+). The 60-residue stretch at 557 to 616 (PKVVTMTIKPDKIRDVIGPGGKKINEIIDETGVKLDIEQDGTIFIGAVDQAMINRAREII) folds into the KH domain. Residues 626–694 (GQTYQATVKR…KQGRVNASHR (69 aa)) form the S1 motif domain.

The protein belongs to the polyribonucleotide nucleotidyltransferase family. It depends on Mg(2+) as a cofactor.

The protein localises to the cytoplasm. The enzyme catalyses RNA(n+1) + phosphate = RNA(n) + a ribonucleoside 5'-diphosphate. In terms of biological role, involved in mRNA degradation. Catalyzes the phosphorolysis of single-stranded polyribonucleotides processively in the 3'- to 5'-direction. This is Polyribonucleotide nucleotidyltransferase from Staphylococcus aureus (strain MRSA252).